Here is a 238-residue protein sequence, read N- to C-terminus: Ureidoacrylate amidohydrolase RutB (238 aa).

The Proton acceptor role is filled by aspartate 35. The active site involves lysine 144. Cysteine 177 functions as the Nucleophile in the catalytic mechanism.

It belongs to the isochorismatase family. RutB subfamily.

The catalysed reaction is (Z)-3-ureidoacrylate + H2O + H(+) = (Z)-3-aminoacrylate + NH4(+) + CO2. It catalyses the reaction (Z)-3-ureidoacrylate + H2O = (Z)-3-aminoacrylate + carbamate + H(+). It carries out the reaction (Z)-2-methylureidoacrylate + H2O + H(+) = (Z)-2-methylaminoacrylate + NH4(+) + CO2. Hydrolyzes ureidoacrylate to form aminoacrylate and carbamate. The carbamate hydrolyzes spontaneously, thereby releasing one of the nitrogen atoms of the pyrimidine ring as ammonia and one of its carbon atoms as CO2. This Caulobacter vibrioides (strain NA1000 / CB15N) (Caulobacter crescentus) protein is Ureidoacrylate amidohydrolase RutB.